We begin with the raw amino-acid sequence, 145 residues long: Basic phospholipase A2 GL1-1 (145 aa).

An N-terminal signal peptide occupies residues 1–21 (MYPAHLLVLLAVCVSLLGASA). Residues 22–27 (IPPLPL) constitute a propeptide that is removed on maturation. 7 disulfides stabilise this stretch: Cys-38/Cys-98, Cys-54/Cys-144, Cys-56/Cys-72, Cys-71/Cys-125, Cys-78/Cys-118, Cys-87/Cys-111, and Cys-105/Cys-116. Ca(2+) is bound by residues Tyr-55, Gly-57, and Gly-59. Residue His-75 is part of the active site. Residue Asp-76 coordinates Ca(2+). Asp-119 is a catalytic residue.

This sequence belongs to the phospholipase A2 family. Group I subfamily. D49 sub-subfamily. Requires Ca(2+) as cofactor. Expressed by the venom gland.

It is found in the secreted. It catalyses the reaction a 1,2-diacyl-sn-glycero-3-phosphocholine + H2O = a 1-acyl-sn-glycero-3-phosphocholine + a fatty acid + H(+). PLA2 catalyzes the calcium-dependent hydrolysis of the 2-acyl groups in 3-sn-phosphoglycerides. The sequence is that of Basic phospholipase A2 GL1-1 from Laticauda semifasciata (Black-banded sea krait).